The following is a 1470-amino-acid chain: Roundabout homolog 2 (1470 aa).

The signal sequence occupies residues 1-21 (MNPLMFTLLLLFGFLCIQIDG). At 22 to 863 (SRLRQEDFPP…EQITDVVKQP (842 aa)) the chain is on the extracellular side. Ig-like C2-type domains lie at 31–127 (PRIV…ASLE), 133–220 (DDFR…AELT), 225–309 (PTFL…ATLT), 318–413 (PQFV…LEVT), and 422–508 (PIIL…AVLD). Cys52 and Cys110 form a disulfide bridge. Residue Asn123 is glycosylated (N-linked (GlcNAc...) asparagine). Cystine bridges form between Cys154/Cys203, Cys246/Cys293, and Cys339/Cys395. An N-linked (GlcNAc...) asparagine glycan is attached at Asn430. An intrachain disulfide couples Cys443 to Cys492. Fibronectin type-III domains are found at residues 528–622 (PPSK…TQDI), 641–739 (VVVR…TEEA), and 743–840 (PPQS…IGGR). 4 N-linked (GlcNAc...) asparagine glycosylation sites follow: Asn756, Asn786, Asn793, and Asn849. The helical transmembrane segment at 864–884 (AFIAGIGGACWVILMGFSIWL) threads the bilayer. The Cytoplasmic portion of the chain corresponds to 885-1470 (YWRRKKRKGL…GSNSQGQFTE (586 aa)). 4 disordered regions span residues 1036–1089 (GFGY…LPGT), 1129–1159 (EDRVPTPPVRGVASSPAISFGQQSTATLTPS), 1190–1371 (IQSN…DCPA), and 1383–1470 (DWIN…QFTE). Over residues 1144–1158 (PAISFGQQSTATLTP) the composition is skewed to polar residues. Phosphothreonine is present on Thr1157. The residue at position 1159 (Ser1159) is a Phosphoserine. Positions 1194-1203 (TPPPQPPAPP) are enriched in pro residues. Positions 1215 to 1231 (LETDVPDEDADDEEEPL) are enriched in acidic residues. Residues 1243-1288 (TPGSSMDNLDSSVTGKAFSSSQRQRPTSPFSTDSNTSAAQNQSQRP) are compositionally biased toward polar residues. The span at 1315–1325 (DLPPPPDPPPG) shows a compositional bias: pro residues. Over residues 1328-1343 (LRQQIGLSQHSGNVEN) the composition is skewed to polar residues. Residues 1413–1437 (SKPSFPSPGGHSSSGTSSSKGSTGP) are compositionally biased toward low complexity. Residues 1461–1470 (GSNSQGQFTE) are compositionally biased toward polar residues.

This sequence belongs to the immunoglobulin superfamily. ROBO family. As to quaternary structure, interacts with SLIT2. Expressed in embryonal spinal cord.

It localises to the membrane. Receptor for SLIT2, and probably SLIT1, which are thought to act as molecular guidance cue in cellular migration, including axonal navigation at the ventral midline of the neural tube and projection of axons to different regions during neuronal development. This Mus musculus (Mouse) protein is Roundabout homolog 2 (Robo2).